A 348-amino-acid polypeptide reads, in one-letter code: MFKMVSSPHTHSSNLTAKFMLWVMVAMLPALGMQAYFFGYGVFIQVFIALLLAVAIEIAIAKLRRKLTAFYVADLSGVLTALILAISIPPYAPYWIIVIGIIVALLLAKHSYGGLGQNLFNPAMVAYALLLVSFPVQMTGWLVPIDLLNEPPTFGDAISLVFSGVTSDGFSVHQLLGSVDGIAQATPLDSAKTSMQKLGVEGVLQSPIFSGLFANGWWQINLAFLAGGLLLIYKRIIHWQIPAAMLGMFALLSGLTDLLLPHTHLNVVSQLFSGAMMFGAFFIATDPVTASITPRGKLIFGGLIGLFVYLIRYYGNYPDAVAFSVLLANICVPLIDHYTQPRLYGTGR.

The next 5 membrane-spanning stretches (helical) occupy residues 15 to 35, 36 to 56, 67 to 87, 88 to 108, and 125 to 145; these read LTAKFMLWVMVAMLPALGMQA, YFFGYGVFIQVFIALLLAVAI, LTAFYVADLSGVLTALILAIS, IPPYAPYWIIVIGIIVALLLA, and VAYALLLVSFPVQMTGWLVPI. Thr186 bears the FMN phosphoryl threonine mark. The next 5 membrane-spanning stretches (helical) occupy residues 212-232, 241-261, 265-285, 298-318, and 320-340; these read LFANGWWQINLAFLAGGLLLI, IPAAMLGMFALLSGLTDLLLP, LNVVSQLFSGAMMFGAFFIAT, LIFGGLIGLFVYLIRYYGNYP, and AVAFSVLLANICVPLIDHYTQ.

This sequence belongs to the NqrB/RnfD family. As to quaternary structure, the complex is composed of six subunits: RnfA, RnfB, RnfC, RnfD, RnfE and RnfG. The cofactor is FMN.

It is found in the cell inner membrane. Part of a membrane-bound complex that couples electron transfer with translocation of ions across the membrane. The chain is Ion-translocating oxidoreductase complex subunit D from Actinobacillus pleuropneumoniae serotype 3 (strain JL03).